The primary structure comprises 309 residues: tRNA dimethylallyltransferase (309 aa).

10 to 17 is an ATP binding site; the sequence is GPTAVGKT. 12-17 is a binding site for substrate; sequence TAVGKT. The interval 35–38 is interaction with substrate tRNA; sequence DSMQ.

The protein belongs to the IPP transferase family. Monomer. The cofactor is Mg(2+).

It catalyses the reaction adenosine(37) in tRNA + dimethylallyl diphosphate = N(6)-dimethylallyladenosine(37) in tRNA + diphosphate. In terms of biological role, catalyzes the transfer of a dimethylallyl group onto the adenine at position 37 in tRNAs that read codons beginning with uridine, leading to the formation of N6-(dimethylallyl)adenosine (i(6)A). The polypeptide is tRNA dimethylallyltransferase (Clostridium botulinum (strain Eklund 17B / Type B)).